We begin with the raw amino-acid sequence, 79 residues long: Acyl carrier protein (79 aa).

The Carrier domain occupies 2 to 77 (DNIEQRVKKI…QAIDYATAHV (76 aa)). Ser37 is modified (O-(pantetheine 4'-phosphoryl)serine).

The protein belongs to the acyl carrier protein (ACP) family. Post-translationally, 4'-phosphopantetheine is transferred from CoA to a specific serine of apo-ACP by AcpS. This modification is essential for activity because fatty acids are bound in thioester linkage to the sulfhydryl of the prosthetic group.

It is found in the cytoplasm. Its pathway is lipid metabolism; fatty acid biosynthesis. Carrier of the growing fatty acid chain in fatty acid biosynthesis. The protein is Acyl carrier protein of Cupriavidus pinatubonensis (strain JMP 134 / LMG 1197) (Cupriavidus necator (strain JMP 134)).